The primary structure comprises 344 residues: Holliday junction branch migration complex subunit RuvB (344 aa).

The span at 1 to 10 (MAIQSSSSGS) shows a compositional bias: low complexity. The disordered stretch occupies residues 1 to 37 (MAIQSSSSGSKPPAPKRLVAPEATAAEGDGGRDEGLR). Residues 13 to 197 (PAPKRLVAPE…FGLIQRLEFY (185 aa)) form a large ATPase domain (RuvB-L) region. ATP is bound by residues Leu36, Arg37, Gly78, Lys81, Thr82, Thr83, 144 to 146 (EDF), Arg187, Tyr197, and Arg234. A Mg(2+)-binding site is contributed by Thr82. A small ATPAse domain (RuvB-S) region spans residues 198–268 (SCSDLEAIVS…VVVEALAMHR (71 aa)). Positions 271-344 (GRGLDPSDRR…DAGRAHLEAA (74 aa)) are head domain (RuvB-H). DNA is bound by residues Arg326 and Arg331.

It belongs to the RuvB family. In terms of assembly, homohexamer. Forms an RuvA(8)-RuvB(12)-Holliday junction (HJ) complex. HJ DNA is sandwiched between 2 RuvA tetramers; dsDNA enters through RuvA and exits via RuvB. An RuvB hexamer assembles on each DNA strand where it exits the tetramer. Each RuvB hexamer is contacted by two RuvA subunits (via domain III) on 2 adjacent RuvB subunits; this complex drives branch migration. In the full resolvosome a probable DNA-RuvA(4)-RuvB(12)-RuvC(2) complex forms which resolves the HJ.

Its subcellular location is the cytoplasm. It catalyses the reaction ATP + H2O = ADP + phosphate + H(+). In terms of biological role, the RuvA-RuvB-RuvC complex processes Holliday junction (HJ) DNA during genetic recombination and DNA repair, while the RuvA-RuvB complex plays an important role in the rescue of blocked DNA replication forks via replication fork reversal (RFR). RuvA specifically binds to HJ cruciform DNA, conferring on it an open structure. The RuvB hexamer acts as an ATP-dependent pump, pulling dsDNA into and through the RuvAB complex. RuvB forms 2 homohexamers on either side of HJ DNA bound by 1 or 2 RuvA tetramers; 4 subunits per hexamer contact DNA at a time. Coordinated motions by a converter formed by DNA-disengaged RuvB subunits stimulates ATP hydrolysis and nucleotide exchange. Immobilization of the converter enables RuvB to convert the ATP-contained energy into a lever motion, pulling 2 nucleotides of DNA out of the RuvA tetramer per ATP hydrolyzed, thus driving DNA branch migration. The RuvB motors rotate together with the DNA substrate, which together with the progressing nucleotide cycle form the mechanistic basis for DNA recombination by continuous HJ branch migration. Branch migration allows RuvC to scan DNA until it finds its consensus sequence, where it cleaves and resolves cruciform DNA. In Synechococcus sp. (strain RCC307), this protein is Holliday junction branch migration complex subunit RuvB.